The chain runs to 679 residues: Glutamine-dependent NAD(+) synthetase (679 aa).

One can recognise a CN hydrolase domain in the interval 12–276 (VRVAACTHHT…VRRSVADVDT (265 aa)). Glu52 (proton acceptor; for glutaminase activity) is an active-site residue. The For glutaminase activity role is filled by Lys121. Residue Tyr127 coordinates L-glutamine. The active-site Nucleophile; for glutaminase activity is the Cys176. Residues Ser203 and Arg209 each coordinate L-glutamine. The ligase stretch occupies residues 337–679 (QQDCYEAYNI…DQIDREVPKG (343 aa)). 366–373 (GVSGGLDS) is an ATP binding site. Asn456 is a deamido-NAD(+) binding site. Position 480 (Thr480) interacts with ATP. Deamido-NAD(+)-binding positions include Glu485, 490 to 493 (WSTY), and Lys635. The tract at residues 639 to 658 (LPNGPKVSHGGALSPRGDWR) is disordered.

In the C-terminal section; belongs to the NAD synthetase family.

It carries out the reaction deamido-NAD(+) + L-glutamine + ATP + H2O = L-glutamate + AMP + diphosphate + NAD(+) + H(+). It participates in cofactor biosynthesis; NAD(+) biosynthesis; NAD(+) from deamido-NAD(+) (L-Gln route): step 1/1. Its function is as follows. Catalyzes the ATP-dependent amidation of deamido-NAD to form NAD. Uses L-glutamine as a nitrogen source. The polypeptide is Glutamine-dependent NAD(+) synthetase (Mycobacterium bovis (strain ATCC BAA-935 / AF2122/97)).